We begin with the raw amino-acid sequence, 210 residues long: MKKFLIAPSILSADFARLGEDTANVLAAGGDVVHFDVMDNHYVPNLTIGPMVCEALRNYGITAPIDVHLMVKPVDRIVPDFAKAGASYISFHPEASEHVDRTIQLIKEHGCKAGLVFNPATPLSYLDYVMDKIDVILLMSVNPGFGGQSFIHGTLDKLRQVRKLIDDSGRDIRLEVDGGVKVDNIAEIAAAGADMFVAGSAIFGQPDYRK.

A substrate-binding site is contributed by serine 9. A divalent metal cation contacts are provided by histidine 34, aspartate 36, and histidine 68. Catalysis depends on aspartate 36, which acts as the Proton acceptor. Substrate contacts are provided by residues histidine 68, glycine 144–glycine 147, aspartate 177–glycine 179, and glycine 199–serine 200. Aspartate 177 is a binding site for a divalent metal cation. Aspartate 177 functions as the Proton donor in the catalytic mechanism.

It belongs to the ribulose-phosphate 3-epimerase family. A divalent metal cation serves as cofactor.

It carries out the reaction D-ribulose 5-phosphate = D-xylulose 5-phosphate. Its pathway is carbohydrate degradation. Its function is as follows. Catalyzes the reversible epimerization of D-ribulose 5-phosphate to D-xylulose 5-phosphate. This Serratia marcescens protein is Ribulose-phosphate 3-epimerase.